A 272-amino-acid polypeptide reads, in one-letter code: Phosphate import ATP-binding protein PstB (272 aa).

Residues 20–267 (VKKEVVYETN…PADQRTADYI (248 aa)) enclose the ABC transporter domain. An ATP-binding site is contributed by 58 to 65 (GPSGCGKS).

Belongs to the ABC transporter superfamily. Phosphate importer (TC 3.A.1.7) family. In terms of assembly, the complex is composed of two ATP-binding proteins (PstB), two transmembrane proteins (PstC and PstA) and a solute-binding protein (PstS).

Its subcellular location is the cell membrane. The catalysed reaction is phosphate(out) + ATP + H2O = ADP + 2 phosphate(in) + H(+). Functionally, part of the ABC transporter complex PstSACB involved in phosphate import. Responsible for energy coupling to the transport system. The protein is Phosphate import ATP-binding protein PstB of Geobacillus kaustophilus (strain HTA426).